The following is a 467-amino-acid chain: UDP-N-acetylmuramate--L-alanine ligase (467 aa).

114 to 120 contacts ATP; the sequence is GTHGKTT.

Belongs to the MurCDEF family.

Its subcellular location is the cytoplasm. The catalysed reaction is UDP-N-acetyl-alpha-D-muramate + L-alanine + ATP = UDP-N-acetyl-alpha-D-muramoyl-L-alanine + ADP + phosphate + H(+). The protein operates within cell wall biogenesis; peptidoglycan biosynthesis. Cell wall formation. The polypeptide is UDP-N-acetylmuramate--L-alanine ligase (Azorhizobium caulinodans (strain ATCC 43989 / DSM 5975 / JCM 20966 / LMG 6465 / NBRC 14845 / NCIMB 13405 / ORS 571)).